The sequence spans 762 residues: Proline-rich receptor-like protein kinase PERK10 (762 aa).

Residues 1-322 are disordered; that stretch reads MTTPAQAPRE…PTPVTDNSSS (322 aa). Residues 1–328 are Extracellular-facing; the sequence is MTTPAQAPRE…NSSSSGISIA (328 aa). Low complexity predominate over residues 13–23; it reads SLSPSLASPPL. Residue Asn37 is glycosylated (N-linked (GlcNAc...) asparagine). Residues 41–57 show a composition bias toward low complexity; it reads PTREPTNGNPPETTNTP. Pro residues-rich tracts occupy residues 60 to 210, 231 to 246, and 254 to 275; these read SSPP…PSTP, PPPPGSKRPTPSPPSP, and HPSPPSPPEETLPPPKPSPDPL. Residues 276–305 show a composition bias toward low complexity; sequence PSNSSSPPTLLPPSSVVSPPSPPRKSVSGP. Asn278 and Asn319 each carry an N-linked (GlcNAc...) asparagine glycan. A helical transmembrane segment spans residues 329-349; sequence AVVGVSIGVALVLLTLIGVVV. Residues 350 to 762 lie on the Cytoplasmic side of the membrane; the sequence is CCLKKRKKRL…NSYISKDENL (413 aa). Residues 370 to 410 form a disordered region; that stretch reads TPMESSSPRSDSALLKTQSSAPLVGNRSSNRTYLSQSEPGG. Positions 372–407 are enriched in polar residues; sequence MESSSPRSDSALLKTQSSAPLVGNRSSNRTYLSQSE. The region spanning 430–706 is the Protein kinase domain; that stretch reads FSDENLLGEG…SQIVRAFDSL (277 aa). ATP-binding positions include 436-444 and Lys458; that span reads LGEGGFGRV. Asp554 functions as the Proton acceptor in the catalytic mechanism.

The protein belongs to the protein kinase superfamily. Ser/Thr protein kinase family. Interacts with KIPK1 and KIPK2 (via its cytosolic domain). Mostly expressed in inflorescence bolts and flower buds, and, to a lower extent, in roots, seedlings, leaves and siliques.

It localises to the cell membrane. The catalysed reaction is L-seryl-[protein] + ATP = O-phospho-L-seryl-[protein] + ADP + H(+). It carries out the reaction L-threonyl-[protein] + ATP = O-phospho-L-threonyl-[protein] + ADP + H(+). In terms of biological role, could be involved in the negative regulation of root growth. The sequence is that of Proline-rich receptor-like protein kinase PERK10 (PERK10) from Arabidopsis thaliana (Mouse-ear cress).